The chain runs to 379 residues: MATCPVLQKETLFQTGDYAYRIPALIYLSKQKTLLAFAEKRLTKTDEHADLFVLRRGSYNADTHQVQWQAEEVVTQAYLEGHRSMSPCPLYDKQTRTLFLFFIAVRGQISEHHQLQTGVNVTRLCHITSTDHGKTWSAVQDLTDTTIGSTHQDWATFGVGPGHCLQLRNTAGSLLVPAYAYRKQPPIHAPAPSAFCFLSHDHGSTWELGHFVSQNSLECQVAEVGTGAERVVYLNARSCLGARVQAQSPNSGLDFQDNQVVSKLVEPPKGCHGSVIAFPNPTSKADALDVWLLYTHPTDSRKRTNLGVYLNQKPLDPTTWSAPTLLATGICAYSDLQNMGHGPDGSPQFGCLYESNNYEEIVFLMFTLKQAFPAVFGAQ.

An FRIP motif motif is present at residues 20 to 23 (YRIP). Substrate contacts are provided by arginine 21 and arginine 41. Aspartate 46 functions as the Proton acceptor in the catalytic mechanism. Residues 127-138 (ITSTDHGKTWSA) form a BNR 1 repeat. Substrate contacts are provided by tyrosine 179 and tyrosine 181. The stretch at 197–208 (FLSHDHGSTWEL) is one BNR 2 repeat. Positions 218, 237, and 303 each coordinate substrate. The active-site Nucleophile is the tyrosine 333. Glutamate 354 is a catalytic residue.

Belongs to the glycosyl hydrolase 33 family.

Its subcellular location is the cytoplasm. It catalyses the reaction Hydrolysis of alpha-(2-&gt;3)-, alpha-(2-&gt;6)-, alpha-(2-&gt;8)- glycosidic linkages of terminal sialic acid residues in oligosaccharides, glycoproteins, glycolipids, colominic acid and synthetic substrates.. Catalyzes the removal of sialic acid (N-acetylneuraminic acid) moieties from glycoproteins, oligosaccharides and gangliosides. In Cricetulus griseus (Chinese hamster), this protein is Sialidase-2 (NEU2).